Reading from the N-terminus, the 165-residue chain is Endoribonuclease YbeY (165 aa).

Residues H130, H134, and H140 each contribute to the Zn(2+) site.

It belongs to the endoribonuclease YbeY family. The cofactor is Zn(2+).

The protein resides in the cytoplasm. Single strand-specific metallo-endoribonuclease involved in late-stage 70S ribosome quality control and in maturation of the 3' terminus of the 16S rRNA. The chain is Endoribonuclease YbeY from Streptococcus pyogenes serotype M1.